The chain runs to 779 residues: Acyl-CoA dehydrogenase family member 11 (779 aa).

Residue K175 is modified to N6-acetyllysine. At S210 the chain carries Phosphoserine. Y323 bears the Phosphotyrosine mark. 2 positions are modified to N6-succinyllysine: K368 and K390. FAD-binding positions include 503 to 513, 511 to 513, 537 to 539, and S539; these read FCMTEPNVSSS, SSS, and WSS. S513 contributes to the substrate binding site. Substrate is bound at residue 628–631; it reads GPGR. Residues R656, Q726, and 726–730 contribute to the FAD site; that span reads QVHGG. A substrate-binding site is contributed by G754. FAD contacts are provided by residues 755 to 757 and E757; that span reads PDE. K765 carries the N6-acetyllysine modification.

The protein belongs to the acyl-CoA dehydrogenase family. Homodimer. It depends on FAD as a cofactor.

Its subcellular location is the peroxisome. The protein localises to the mitochondrion membrane. It catalyses the reaction a 2,3-saturated acyl-CoA + oxidized [electron-transfer flavoprotein] + H(+) = a (2E)-enoyl-CoA + reduced [electron-transfer flavoprotein]. The catalysed reaction is docosanoyl-CoA + oxidized [electron-transfer flavoprotein] + H(+) = (2E)-docosenoyl-CoA + reduced [electron-transfer flavoprotein]. The enzyme catalyses tetracosanoyl-CoA + oxidized [electron-transfer flavoprotein] + H(+) = (2E)-tetracosenoyl-CoA + reduced [electron-transfer flavoprotein]. It carries out the reaction eicosanoyl-CoA + oxidized [electron-transfer flavoprotein] + H(+) = (2E)-eicosenoyl-CoA + reduced [electron-transfer flavoprotein]. It catalyses the reaction hexacosanoyl-CoA + oxidized [electron-transfer flavoprotein] + H(+) = (2E)-hexacosenoyl-CoA + reduced [electron-transfer flavoprotein]. The catalysed reaction is tricosanoyl-CoA + oxidized [electron-transfer flavoprotein] + H(+) = (2E)-tricosenoyl-CoA + reduced [electron-transfer flavoprotein]. The protein operates within lipid metabolism; fatty acid beta-oxidation. Functionally, acyl-CoA dehydrogenase, that exhibits maximal activity towards saturated C22-CoA. Probably participates in beta-oxydation and energy production but could also play a role in the metabolism of specific fatty acids to control fatty acids composition of cellular lipids in brain. This Rattus norvegicus (Rat) protein is Acyl-CoA dehydrogenase family member 11 (Acad11).